The primary structure comprises 215 residues: Oligoribonuclease (215 aa).

The Exonuclease domain occupies 5-170 (LVWIDCEMTG…ADIHESIREL (166 aa)). Tyr-127 is a catalytic residue. The tract at residues 196-215 (LDEGKDAPGPSDSASAPPTG) is disordered. Over residues 202–215 (APGPSDSASAPPTG) the composition is skewed to low complexity.

This sequence belongs to the oligoribonuclease family.

Its subcellular location is the cytoplasm. Functionally, 3'-to-5' exoribonuclease specific for small oligoribonucleotides. This chain is Oligoribonuclease, found in Mycobacterium avium (strain 104).